A 204-amino-acid polypeptide reads, in one-letter code: Thymidine kinase (204 aa).

Residues 23-30 (GSMFSGKT) and 95-98 (DEAQ) each bind ATP. Catalysis depends on E96, which acts as the Proton acceptor. Zn(2+) is bound by residues C152, C155, C184, and C187.

The protein belongs to the thymidine kinase family. As to quaternary structure, homotetramer.

The protein resides in the cytoplasm. The catalysed reaction is thymidine + ATP = dTMP + ADP + H(+). This chain is Thymidine kinase, found in Porphyromonas gingivalis (strain ATCC 33277 / DSM 20709 / CIP 103683 / JCM 12257 / NCTC 11834 / 2561).